We begin with the raw amino-acid sequence, 1001 residues long: E3 ubiquitin-protein ligase BRE1B (1001 aa).

The disordered stretch occupies residues 1–31 (MSGLGNKRAAGDGGSGPPEKKLSREEKTTTT). The span at 18–28 (PEKKLSREEKT) shows a compositional bias: basic and acidic residues. Position 20 is an N6-acetyllysine (K20). Residue S42 is modified to Phosphoserine. Residues 45–91 (EEIDLKVLQFKNKKLAERLEQRQACEDELRERIEKLEKRQATDDATL) are a coiled coil. Residues 116-149 (GELSSAPEAPGTQEGPTCDGTPLPEPGTSELREP) are disordered. 2 coiled-coil regions span residues 228–377 (ARTR…LRSL) and 437–523 (LQKK…AQTS). Residues K355 and K517 each carry the N6-acetyllysine modification. The disordered stretch occupies residues 516–646 (GKLRAQTSGS…EKAKVEEAKR (131 aa)). A compositionally biased stretch (polar residues) spans 520-531 (AQTSGSTHSTPN). S528 carries the post-translational modification Phosphoserine. Glycyl lysine isopeptide (Lys-Gly) (interchain with G-Cter in SUMO2) cross-links involve residues K578 and K579. S585 is modified (phosphoserine). Composition is skewed to basic and acidic residues over residues 602–619 (RGREPEARPKRELREREG) and 633–646 (RADREKAKVEEAKR). Positions 627-946 (VASALSRADR…EEIKEYKARL (320 aa)) form a coiled coil. The segment at 948–987 (CPCCNTRKKDAVLTKCFHVFCFECVRGRYEARQRKCPKCN) adopts an RING-type zinc-finger fold.

It belongs to the BRE1 family. In terms of assembly, component of the RNF20/40 complex (also known as BRE1 complex) probably composed of 2 copies of RNF20/BRE1A and 2 copies of RNF40/BRE1B. Interacts with UBE2E1/UBCH6. Interacts with RB1 and WAC.

It localises to the nucleus. It catalyses the reaction S-ubiquitinyl-[E2 ubiquitin-conjugating enzyme]-L-cysteine + [acceptor protein]-L-lysine = [E2 ubiquitin-conjugating enzyme]-L-cysteine + N(6)-ubiquitinyl-[acceptor protein]-L-lysine.. It functions in the pathway protein modification; protein ubiquitination. In terms of biological role, component of the RNF20/40 E3 ubiquitin-protein ligase complex that mediates monoubiquitination of 'Lys-120' of histone H2B (H2BK120ub1). H2BK120ub1 gives a specific tag for epigenetic transcriptional activation and is also prerequisite for histone H3 'Lys-4' and 'Lys-79' methylation (H3K4me and H3K79me, respectively). It thereby plays a central role in histone code and gene regulation. The RNF20/40 complex forms a H2B ubiquitin ligase complex in cooperation with the E2 enzyme UBE2A or UBE2B; reports about the cooperation with UBE2E1/UBCH are contradictory. Required for transcriptional activation of Hox genes. This chain is E3 ubiquitin-protein ligase BRE1B (RNF40), found in Macaca fascicularis (Crab-eating macaque).